The primary structure comprises 515 residues: Bifunctional solanapyrone synthase (515 aa).

An N-terminal signal peptide occupies residues 1-25; it reads MRLIILNLLSLGITPSVVGHSGPHR. N66 is a glycosylation site (N-linked (GlcNAc...) asparagine). The 171-residue stretch at 91–261 folds into the FAD-binding PCMH-type domain; it reads APKNPACIYT…THIVQRTYPL (171 aa). H128 carries the post-translational modification Pros-8alpha-FAD histidine. N-linked (GlcNAc...) asparagine glycans are attached at residues N274 and N355.

The protein belongs to the oxygen-dependent FAD-linked oxidoreductase family. FAD is required as a cofactor.

It catalyses the reaction prosolanapyrone II + O2 = prosolanapyrone III + H2O2. The enzyme catalyses prosolanapyrone III = (-)-solanapyrone A. The catalysed reaction is prosolanapyrone III = solanapyrone D. It functions in the pathway phytotoxin biosynthesis. Its function is as follows. Bifunctional solanapyrone synthase; part of the gene cluster that mediates the biosynthesis of the phytotoxin solanapyrone, a causal agent of early blight disease of potato and tomato. The prosolanapyrone synthase sol1 is a polyketide synthase that produces the octaketide desmethylprosolanapyrone I via sequential condensations of 7 malonyl-CoA units with one acetyl-CoA unit, and one methylation step. The octaketide backbone is further methylated by the sol2 O-methyltransferase to yield prosolanapyrone I. Prosolanapyrone I is hydroxylated to prosolanapyrone II by the cytochrome P450 monooxygenase sol6. The solanapyrone synthase sol5 then catalyzes the oxidation of prosolanapyrone II and the subsequent Diels Alder cycloisomerization of the product prosolanapyrone III to solanapyrones A and D. Solanapyrones A and D are then converted into solanapyrones B and E, respectively, by the sol3 dehydrogenase. The sequence is that of Bifunctional solanapyrone synthase (sol5) from Alternaria solani.